The primary structure comprises 203 residues: Holliday junction branch migration complex subunit RuvA (203 aa).

The segment at 1–63 (MIGQLSGKVD…EEHIHLYGFL (63 aa)) is domain I. A domain II region spans residues 64–142 (NLEEKIFFNL…KISSGSAIIK (79 aa)). The flexible linker stretch occupies residues 143–149 (ESLNIKH). Positions 150 to 203 (ITPVASNEVIKALVNLGFSRFEAQNAVQGIITQNPEISIDELIKTALKNRNSNF) are domain III.

It belongs to the RuvA family. As to quaternary structure, homotetramer. Forms an RuvA(8)-RuvB(12)-Holliday junction (HJ) complex. HJ DNA is sandwiched between 2 RuvA tetramers; dsDNA enters through RuvA and exits via RuvB. An RuvB hexamer assembles on each DNA strand where it exits the tetramer. Each RuvB hexamer is contacted by two RuvA subunits (via domain III) on 2 adjacent RuvB subunits; this complex drives branch migration. In the full resolvosome a probable DNA-RuvA(4)-RuvB(12)-RuvC(2) complex forms which resolves the HJ.

The protein localises to the cytoplasm. Functionally, the RuvA-RuvB-RuvC complex processes Holliday junction (HJ) DNA during genetic recombination and DNA repair, while the RuvA-RuvB complex plays an important role in the rescue of blocked DNA replication forks via replication fork reversal (RFR). RuvA specifically binds to HJ cruciform DNA, conferring on it an open structure. The RuvB hexamer acts as an ATP-dependent pump, pulling dsDNA into and through the RuvAB complex. HJ branch migration allows RuvC to scan DNA until it finds its consensus sequence, where it cleaves and resolves the cruciform DNA. In Rickettsia africae (strain ESF-5), this protein is Holliday junction branch migration complex subunit RuvA.